The following is a 450-amino-acid chain: Probable galactarate/D-glucarate transporter GudP (450 aa).

The Cytoplasmic portion of the chain corresponds to M1–W20. A helical transmembrane segment spans residues I21–I41. Over A42–G58 the chain is Periplasmic. The helical transmembrane segment at Y59–L79 threads the bilayer. The Cytoplasmic portion of the chain corresponds to D80–K85. Residues R86 to V105 form a helical membrane-spanning segment. The Periplasmic portion of the chain corresponds to D106–S109. The chain crosses the membrane as a helical span at residues G110 to F132. Over P133–S153 the chain is Cytoplasmic. A helical transmembrane segment spans residues I154–T174. Residues H175 to E176 lie on the Periplasmic side of the membrane. Residues V177 to W197 form a helical membrane-spanning segment. At L198 to M254 the chain is on the cytoplasmic side. The helical transmembrane segment at I255–F275 threads the bilayer. Residues P276 to A290 lie on the Periplasmic side of the membrane. The helical transmembrane segment at G291 to I311 threads the bilayer. The Cytoplasmic portion of the chain corresponds to S312 to P329. Residues I330 to W350 form a helical membrane-spanning segment. M351 is a topological domain (periplasmic). The chain crosses the membrane as a helical span at residues I352–V372. Topologically, residues M373–G387 are cytoplasmic. The chain crosses the membrane as a helical span at residues L388–V408. The Periplasmic portion of the chain corresponds to G409–N415. Residues G416 to V436 traverse the membrane as a helical segment. At G437–Q450 the chain is on the cytoplasmic side.

It belongs to the major facilitator superfamily. Phthalate permease family.

It localises to the cell inner membrane. The enzyme catalyses galactarate(in) + H(+)(in) = galactarate(out) + H(+)(out). It catalyses the reaction D-glucarate(in) + H(+)(in) = D-glucarate(out) + H(+)(out). It carries out the reaction (R)-glycerate(in) + H(+)(in) = (R)-glycerate(out) + H(+)(out). In terms of biological role, probably involved in the uptake of galactarate and/or D-glucarate. May also transport D-glycerate. The chain is Probable galactarate/D-glucarate transporter GudP from Escherichia coli (strain K12).